An 84-amino-acid polypeptide reads, in one-letter code: Large ribosomal subunit protein bL31B (84 aa).

Belongs to the bacterial ribosomal protein bL31 family. Type B subfamily. As to quaternary structure, part of the 50S ribosomal subunit.

The chain is Large ribosomal subunit protein bL31B from Parabacteroides distasonis (strain ATCC 8503 / DSM 20701 / CIP 104284 / JCM 5825 / NCTC 11152).